The sequence spans 477 residues: Tyrosine--tRNA ligase, mitochondrial (477 aa).

Residues 1 to 16 constitute a mitochondrion transit peptide; sequence MAAPILRSFSWGRWSG. Position 77 (Tyr-77) interacts with L-tyrosine. ATP is bound at residue Asp-81. Positions 82–91 match the 'HIGH' region motif; that stretch reads PTADSLHVGH. Asp-121, Tyr-221, Gln-225, and Asp-228 together coordinate L-tyrosine. 244–246 is an ATP binding site; it reads GSD. Gln-247 is an L-tyrosine binding site. ATP-binding residues include Ile-274 and Lys-284. The short motif at 281–285 is the 'KMSKS' region element; sequence KLGKS. N6-acetyllysine is present on residues Lys-355 and Lys-367.

The protein belongs to the class-I aminoacyl-tRNA synthetase family. In terms of assembly, homodimer.

It is found in the mitochondrion matrix. The enzyme catalyses tRNA(Tyr) + L-tyrosine + ATP = L-tyrosyl-tRNA(Tyr) + AMP + diphosphate + H(+). Its function is as follows. Catalyzes the attachment of tyrosine to tRNA(Tyr) in a two-step reaction: tyrosine is first activated by ATP to form Tyr-AMP and then transferred to the acceptor end of tRNA(Tyr). The polypeptide is Tyrosine--tRNA ligase, mitochondrial (YARS2) (Homo sapiens (Human)).